Here is a 140-residue protein sequence, read N- to C-terminus: Non-specific lipid transfer protein GPI-anchored 33 (140 aa).

A signal peptide spans 1-27 (MAYTNKVTISAAVATMMLFLAVTIVDA). 4 cysteine pairs are disulfide-bonded: Cys-40–Cys-80, Cys-52–Cys-64, Cys-65–Cys-104, and Cys-78–Cys-112. The N-linked (GlcNAc...) asparagine glycan is linked to Asn-91. Gly-115 carries the GPI-anchor amidated glycine lipid modification. Positions 116–140 (DASGGSTNKIAASMVLLGLVASLFF) are cleaved as a propeptide — removed in mature form.

Belongs to the plant LTP family.

It localises to the cell membrane. Its function is as follows. Probable lipid transfer protein. This is Non-specific lipid transfer protein GPI-anchored 33 from Arabidopsis thaliana (Mouse-ear cress).